The chain runs to 689 residues: Glycine--tRNA ligase beta subunit (689 aa).

Belongs to the class-II aminoacyl-tRNA synthetase family. Tetramer of two alpha and two beta subunits.

It localises to the cytoplasm. The catalysed reaction is tRNA(Gly) + glycine + ATP = glycyl-tRNA(Gly) + AMP + diphosphate. In Glaesserella parasuis serovar 5 (strain SH0165) (Haemophilus parasuis), this protein is Glycine--tRNA ligase beta subunit.